Here is a 217-residue protein sequence, read N- to C-terminus: Uracil-DNA glycosylase (217 aa).

The active-site Proton acceptor is the Asp62.

Belongs to the uracil-DNA glycosylase (UDG) superfamily. UNG family.

It is found in the cytoplasm. The enzyme catalyses Hydrolyzes single-stranded DNA or mismatched double-stranded DNA and polynucleotides, releasing free uracil.. In terms of biological role, excises uracil residues from the DNA which can arise as a result of misincorporation of dUMP residues by DNA polymerase or due to deamination of cytosine. The polypeptide is Uracil-DNA glycosylase (Streptococcus uberis (strain ATCC BAA-854 / 0140J)).